A 179-amino-acid chain; its full sequence is ATP synthase subunit delta (179 aa).

This sequence belongs to the ATPase delta chain family. F-type ATPases have 2 components, F(1) - the catalytic core - and F(0) - the membrane proton channel. F(1) has five subunits: alpha(3), beta(3), gamma(1), delta(1), epsilon(1). F(0) has three main subunits: a(1), b(2) and c(10-14). The alpha and beta chains form an alternating ring which encloses part of the gamma chain. F(1) is attached to F(0) by a central stalk formed by the gamma and epsilon chains, while a peripheral stalk is formed by the delta and b chains.

The protein localises to the cell membrane. F(1)F(0) ATP synthase produces ATP from ADP in the presence of a proton or sodium gradient. F-type ATPases consist of two structural domains, F(1) containing the extramembraneous catalytic core and F(0) containing the membrane proton channel, linked together by a central stalk and a peripheral stalk. During catalysis, ATP synthesis in the catalytic domain of F(1) is coupled via a rotary mechanism of the central stalk subunits to proton translocation. Functionally, this protein is part of the stalk that links CF(0) to CF(1). It either transmits conformational changes from CF(0) to CF(1) or is implicated in proton conduction. The sequence is that of ATP synthase subunit delta from Bacillus sp. (strain PS3).